The following is a 578-amino-acid chain: Probable multidrug ABC transporter ATP-binding protein YbhF (578 aa).

2 consecutive ABC transporter domains span residues 6–237 and 330–559; these read ITLN…LMTS and IEAK…PDPT. ATP-binding positions include 40–47 and 362–369; these read GPDGAGKT and GPNGAGKS.

The protein belongs to the ABC transporter superfamily. In terms of assembly, the complex is probably composed of two ATP-binding proteins (YbhF) and two transmembrane proteins (YbhR and YbhS).

Part of the ABC transporter complex YbhFSR that could be involved in efflux of cefoperazone. Probably responsible for energy coupling to the transport system. This Escherichia coli (strain K12) protein is Probable multidrug ABC transporter ATP-binding protein YbhF (ybhF).